The sequence spans 235 residues: RNA-free ribonuclease P (235 aa).

The protein belongs to the HARP family.

The catalysed reaction is Endonucleolytic cleavage of RNA, removing 5'-extranucleotides from tRNA precursor.. Its function is as follows. RNA-free RNase P that catalyzes the removal of the 5'-leader sequence from pre-tRNA to produce the mature 5'-terminus. In Methanothrix thermoacetophila (strain DSM 6194 / JCM 14653 / NBRC 101360 / PT) (Methanosaeta thermophila), this protein is RNA-free ribonuclease P.